Here is a 139-residue protein sequence, read N- to C-terminus: Transthyretin-like protein 5 (139 aa).

The N-terminal stretch at Met1 to Ala15 is a signal peptide.

The protein belongs to the nematode transthyretin-like family.

The protein localises to the secreted. The chain is Transthyretin-like protein 5 (ttr-5) from Caenorhabditis elegans.